We begin with the raw amino-acid sequence, 820 residues long: Protein bicaudal D homolog 2 (820 aa).

An N-acetylserine modification is found at S2. The stretch at 20–270 forms a coiled coil; that stretch reads EWLRAEVKRL…LSHYMSINDS (251 aa). The tract at residues 25-400 is interaction with DYNLL1, DYNC1H1, DYNC1I2, DCTN1 and DCTN2; the sequence is EVKRLSHELA…RLTENLSALR (376 aa). 3 positions are modified to phosphoserine: S190, S224, and S320. A disordered region spans residues 313–332; sequence SSLDNKTSTPRKDGLAPPSP. T321 is subject to Phosphothreonine. Residues 336 to 595 form an interaction with KIF5A region; it reads SDLLSELHIS…LLATEVGRAD (260 aa). Positions 340–539 form a coiled coil; it reads SELHISEIQK…VTFSEELANL (200 aa). Residues S345 and S397 each carry the phosphoserine modification. Disordered regions lie at residues 400 to 427, 563 to 582, 591 to 618, and 799 to 820; these read RRLQAGKERQTSLDNEKDRDSHEDGDYY, QGKAGRTSPEGRGRRSPVLL, VGRADGGTGDNSPSPSSSLPSPLSDPRR, and HEQTRRGRSKAASKAKPASPSL. The span at 404 to 424 shows a compositional bias: basic and acidic residues; that stretch reads AGKERQTSLDNEKDRDSHEDG. Residues S570 and S578 each carry the phosphoserine modification. The segment at 586 to 820 is interaction with RANBP2; the sequence is LLATEVGRAD…SKAKPASPSL (235 aa). A Phosphothreonine modification is found at T598. Residues 602–614 show a composition bias toward low complexity; sequence SPSPSSSLPSPLS. Positions 662 to 804 form a coiled coil; the sequence is DKDKEALMEE…LELDHEQTRR (143 aa). The interval 662–810 is interaction with RAB6A; the sequence is DKDKEALMEE…QTRRGRSKAA (149 aa). S819 carries the post-translational modification Phosphoserine.

This sequence belongs to the BicD family. As to quaternary structure, part of a tripartite complex with dynein and dynactin, acts an adapter linking the dynein motor complex and dynactin. Interacts with CPNE4 (via VWFA domain). Interacts with NEK9. Interacts with DCTN2. Interacts with RAB6A. Interacts with DNAI1. Interacts with DYNLL1, DYNC1H1, DYNC1I2 and DCTN1. Forms a complex with dynein and dynactin. The dynein-dynactin-BICD2 ternary complex (DDB) binds preferentially to tyrosinated microtubules than to detyrosinated microtubules. Interacts with RANBP2, RAB6A and KIF5A. Interacts with KIF1C. Phosphorylated by NEK9 in vitro. Ubiquitously expressed with high expression in the spinal cord.

It localises to the golgi apparatus. Its subcellular location is the cytoplasm. The protein resides in the cytoskeleton. The protein localises to the nucleus. It is found in the nuclear pore complex. It localises to the nucleus envelope. Functionally, acts as an adapter protein linking the dynein motor complex to various cargos and converts dynein from a non-processive to a highly processive motor in the presence of dynactin. Facilitates and stabilizes the interaction between dynein and dynactin and activates dynein processivity (the ability to move along a microtubule for a long distance without falling off the track). Facilitates the binding of RAB6A to the Golgi by stabilizing its GTP-bound form. Regulates coat complex coatomer protein I (COPI)-independent Golgi-endoplasmic reticulum transport via its interaction with RAB6A and recruitment of the dynein-dynactin motor complex. Contributes to nuclear and centrosomal positioning prior to mitotic entry through regulation of both dynein and kinesin-1. During G2 phase of the cell cycle, associates with RANBP2 at the nuclear pores and recruits dynein and dynactin to the nuclear envelope to ensure proper positioning of the nucleus relative to centrosomes prior to the onset of mitosis. This chain is Protein bicaudal D homolog 2 (Bicd2), found in Mus musculus (Mouse).